The sequence spans 47 residues: Large ribosomal subunit protein bL34 (47 aa).

This sequence belongs to the bacterial ribosomal protein bL34 family.

The polypeptide is Large ribosomal subunit protein bL34 (Mycobacterium tuberculosis (strain ATCC 25177 / H37Ra)).